The sequence spans 139 residues: ATP synthase epsilon chain (139 aa).

The protein belongs to the ATPase epsilon chain family. As to quaternary structure, F-type ATPases have 2 components, CF(1) - the catalytic core - and CF(0) - the membrane proton channel. CF(1) has five subunits: alpha(3), beta(3), gamma(1), delta(1), epsilon(1). CF(0) has three main subunits: a, b and c.

It is found in the cell membrane. Produces ATP from ADP in the presence of a proton gradient across the membrane. The sequence is that of ATP synthase epsilon chain from Streptococcus sanguinis.